We begin with the raw amino-acid sequence, 729 residues long: Sodium-dependent neutral amino acid transporter B(0)AT2 (729 aa).

Topologically, residues 1–69 (MPKNSKVVKR…ARPAWNSKLQ (69 aa)) are cytoplasmic. Phosphoserine occurs at positions 25 and 55. The next 3 helical transmembrane spans lie at 70-90 (YILA…FPYL), 98-117 (AYLL…LFFL), and 142-162 (GIGF…NVII). Topologically, residues 163–225 (GWSLFYFSQS…TSISESGGLN (63 aa)) are extracellular. Asn187 and Asn213 each carry an N-linked (GlcNAc...) asparagine glycan. The next 4 helical transmembrane spans lie at 226–244 (WKMT…LAMI), 253–270 (IMYF…CFLI), 306–323 (VFFA…FSSY), and 335–356 (VLVS…FAVL). The Extracellular segment spans residues 357-452 (GFKANVINEK…FIAFTEAMTH (96 aa)). Residues Asn383 and Asn394 are each glycosylated (N-linked (GlcNAc...) asparagine). The next 5 helical transmembrane spans lie at 453 to 472 (FPAS…NLGL), 496 to 514 (ILTV…IFVQ), 530 to 550 (TLPL…VYGI), 571 to 592 (YMWK…IVNM), and 620 to 642 (VICI…IRRC). At 643-729 (NLIDDSSGNL…DMPDMPESDL (87 aa)) the chain is on the cytoplasmic side. Ser687, Ser699, and Ser701 each carry phosphoserine.

Belongs to the sodium:neurotransmitter symporter (SNF) (TC 2.A.22) family. SLC6A15 subfamily.

It is found in the membrane. The catalysed reaction is L-leucine(in) + Na(+)(in) = L-leucine(out) + Na(+)(out). The enzyme catalyses L-isoleucine(in) + Na(+)(in) = L-isoleucine(out) + Na(+)(out). It carries out the reaction L-methionine(in) + Na(+)(in) = L-methionine(out) + Na(+)(out). It catalyses the reaction L-proline(in) + Na(+)(in) = L-proline(out) + Na(+)(out). The catalysed reaction is L-alanine(in) + Na(+)(in) = L-alanine(out) + Na(+)(out). The enzyme catalyses L-asparagine(in) + Na(+)(in) = L-asparagine(out) + Na(+)(out). It carries out the reaction L-valine(in) + Na(+)(in) = L-valine(out) + Na(+)(out). It catalyses the reaction L-cysteine(in) + Na(+)(in) = L-cysteine(out) + Na(+)(out). The catalysed reaction is L-glutamine(in) + Na(+)(in) = L-glutamine(out) + Na(+)(out). The enzyme catalyses L-serine(in) + Na(+)(in) = L-serine(out) + Na(+)(out). It carries out the reaction L-threonine(in) + Na(+)(in) = L-threonine(out) + Na(+)(out). It catalyses the reaction L-pipecolate(in) + Na(+)(in) = L-pipecolate(out) + Na(+)(out). The catalysed reaction is L-phenylalanine(in) + Na(+)(in) = L-phenylalanine(out) + Na(+)(out). In terms of biological role, functions as a sodium-dependent neutral amino acid transporter. Exhibits preference for the branched-chain amino acids, particularly leucine, valine and isoleucine and methionine. Can also transport low-affinity substrates such as alanine, phenylalanine, glutamine and pipecolic acid. Mediates the saturable, pH-sensitive and electrogenic cotransport of proline and sodium ions with a stoichiometry of 1:1. May have a role as transporter for neurotransmitter precursors into neurons. In contrast to other members of the neurotransmitter transporter family, does not appear to be chloride-dependent. In Bos taurus (Bovine), this protein is Sodium-dependent neutral amino acid transporter B(0)AT2 (SLC6A15).